Here is a 620-residue protein sequence, read N- to C-terminus: 1-deoxy-D-xylulose-5-phosphate synthase (620 aa).

Thiamine diphosphate is bound by residues histidine 80 and 121–123 (GHS). Aspartate 152 serves as a coordination point for Mg(2+). Thiamine diphosphate contacts are provided by residues 153–154 (GA), asparagine 181, tyrosine 288, and glutamate 370. Residue asparagine 181 participates in Mg(2+) binding.

This sequence belongs to the transketolase family. DXPS subfamily. As to quaternary structure, homodimer. It depends on Mg(2+) as a cofactor. Requires thiamine diphosphate as cofactor.

The enzyme catalyses D-glyceraldehyde 3-phosphate + pyruvate + H(+) = 1-deoxy-D-xylulose 5-phosphate + CO2. The protein operates within metabolic intermediate biosynthesis; 1-deoxy-D-xylulose 5-phosphate biosynthesis; 1-deoxy-D-xylulose 5-phosphate from D-glyceraldehyde 3-phosphate and pyruvate: step 1/1. Functionally, catalyzes the acyloin condensation reaction between C atoms 2 and 3 of pyruvate and glyceraldehyde 3-phosphate to yield 1-deoxy-D-xylulose-5-phosphate (DXP). The chain is 1-deoxy-D-xylulose-5-phosphate synthase from Escherichia coli O139:H28 (strain E24377A / ETEC).